The sequence spans 79 residues: Sulfur carrier protein TusA (79 aa).

Cysteine 17 acts as the Cysteine persulfide intermediate in catalysis.

The protein belongs to the sulfur carrier protein TusA family.

It localises to the cytoplasm. Its function is as follows. Sulfur carrier protein which probably makes part of a sulfur-relay system. The polypeptide is Sulfur carrier protein TusA (Haemophilus ducreyi (strain 35000HP / ATCC 700724)).